A 696-amino-acid polypeptide reads, in one-letter code: Methionine--tRNA ligase (696 aa).

A 'HIGH' region motif is present at residues 12 to 22 (PYANGAIHLGH). 4 residues coordinate Zn(2+): cysteine 143, cysteine 146, cysteine 156, and cysteine 159. Residues 336-340 (KMSKS) carry the 'KMSKS' region motif. Position 339 (lysine 339) interacts with ATP. A disordered region spans residues 556–580 (SLAPAPEAQSQQRHAEHQQNEVTAE). Positions 591–696 (DFMKVDLRIV…SGAQPGMRVK (106 aa)) constitute a tRNA-binding domain.

This sequence belongs to the class-I aminoacyl-tRNA synthetase family. MetG type 1 subfamily. In terms of assembly, homodimer. Requires Zn(2+) as cofactor.

It localises to the cytoplasm. It catalyses the reaction tRNA(Met) + L-methionine + ATP = L-methionyl-tRNA(Met) + AMP + diphosphate. Functionally, is required not only for elongation of protein synthesis but also for the initiation of all mRNA translation through initiator tRNA(fMet) aminoacylation. This Dechloromonas aromatica (strain RCB) protein is Methionine--tRNA ligase.